The primary structure comprises 205 residues: Small ribosomal subunit protein uS4c (205 aa).

Residues Met-93–Gln-154 enclose the S4 RNA-binding domain.

It belongs to the universal ribosomal protein uS4 family. As to quaternary structure, part of the 30S ribosomal subunit. Contacts protein S5. The interaction surface between S4 and S5 is involved in control of translational fidelity.

It localises to the plastid. Its subcellular location is the chloroplast. One of the primary rRNA binding proteins, it binds directly to 16S rRNA where it nucleates assembly of the body of the 30S subunit. In terms of biological role, with S5 and S12 plays an important role in translational accuracy. The protein is Small ribosomal subunit protein uS4c (rps4) of Chaetosphaeridium globosum (Charophycean green alga).